The following is a 628-amino-acid chain: MMTYDFEYDVIVVGAGHAGCEAALAAARMGCRTLLLTINLDAIALMSCNPSIGGLAKGHLVKEIDALGGEMARNIDATGIQFRILNTRKGPAVRASRAQADKQLYRLRMKRVLENQDNLHLKQGEVTALYCDGSVVRGVDTRSGIRFLGKTVVLTTGTFMRGLIHIGLTHYEGGRAGDLPSIGLSDQLKQLGLQVGRLKTGTPARLDGRTIDFSRLEPQHGDNPPQPFSFSTERITMRQVPCHIAYTNERSHDIIRSGLDRSPLYAGIIEGIGPRYCPSIEDKVVRFPDKDRHQAFIEPEGLDTVEMYPSGMSTSLPIDIQIAFYRSMEGLERVEIMRPAYGIEYDYVDPIQLHTSLETKAITNLYHAGQINGTSGYEEAAGQGIVAGINAALRTRGEEPLILSRSESYIGVMIDDLITLGTKEPYRMFTSRAEYRLLLREDNADQRLREIGYRVGLVSDAEYEGYLRKRDMIQAERERLAATRISMSQAEEEYFTARGLPDLQKGTSYEQLLRRPEITYDDLLSFDTVSRETPSVVREQVEIQIKYQGYIERQLEQIRRSAKLENTPLPTDMDYAAINGLTTEVKEKLTKVRPDTLGQASRIPGVTPAAVSVLSIALKAHAGARKQG.

FAD contacts are provided by residues 14-19, Val126, and Ser181; that span reads GAGHAG. Position 273–287 (273–287) interacts with NAD(+); sequence GPRYCPSIEDKVVRF. Gln370 serves as a coordination point for FAD.

It belongs to the MnmG family. As to quaternary structure, homodimer. Heterotetramer of two MnmE and two MnmG subunits. FAD serves as cofactor.

The protein localises to the cytoplasm. Its function is as follows. NAD-binding protein involved in the addition of a carboxymethylaminomethyl (cmnm) group at the wobble position (U34) of certain tRNAs, forming tRNA-cmnm(5)s(2)U34. This Pelobacter propionicus (strain DSM 2379 / NBRC 103807 / OttBd1) protein is tRNA uridine 5-carboxymethylaminomethyl modification enzyme MnmG.